Reading from the N-terminus, the 204-residue chain is Ribonuclease HII (204 aa).

One can recognise an RNase H type-2 domain in the interval 14-204; sequence QYICGVDEVG…SFKLSCLGEK (191 aa). A divalent metal cation contacts are provided by aspartate 20, glutamate 21, and aspartate 116.

It belongs to the RNase HII family. The cofactor is Mn(2+). It depends on Mg(2+) as a cofactor.

Its subcellular location is the cytoplasm. It catalyses the reaction Endonucleolytic cleavage to 5'-phosphomonoester.. In terms of biological role, endonuclease that specifically degrades the RNA of RNA-DNA hybrids. This Chloroherpeton thalassium (strain ATCC 35110 / GB-78) protein is Ribonuclease HII.